The following is a 1441-amino-acid chain: MYAVYKQAHPPTGLEFTMYCNFFNNSERNLVVAGTSQLYVYRLNRDAEALTKNDGSTEGKAHREKLELVASFSFFGNVMSMASVQLAGAKRDALLLSFKDAKLSVVEYDPGTHDLKTLSLHYFEEPELRDGFVQNVHTPRVRVDPDGRCAAMLIYGTRLVVLPFRRESLAEEHEGLMGEGQRSSFLPSYIIDVRALDEKLLNIIDLQFLHGYYEPTLLILFEPNQTWPGRVAVRQDTCSIVAISLNITQKVHPVIWSLTSLPFDCTQALAVPKPIGGVVIFAVNSLLYLNQSVPPYGVALNSLTTGTTAFPLRTQEGVRITLDCAQAAFISYDKMVISLKGGEIYVLTLITDGMRSVRAFHFDKAAASVLTTSMVTMEPGYLFLGSRLGNSLLLKYTEKLQEPPASSVREAADKEEPPSKKKRVEPAVGWTGGKTVPQDEVDEIEVYGSEAQSGTQLATYSFEVCDSMLNIGPCANAAVGEPAFLSEEFQNSPEPDLEIVVCSGYGKNGALSVLQKSIRPQVVTTFELPGCYDMWTVIAPVRKEEEETPKAESTEQEPSAPKAEEDGRRHGFLILSREDSTMILQTGQEIMELDTSGFATQGPTVFAGNIGDNRYIVQVSPLGIRLLEGVNQLHFIPVDLGAPIVQCAVADPYVVIMSAEGHVTMFLLKSDSYGGRHHRLALHKPPLHHQSKVIALCLYRDVSGMFTTESRLGGARDELGGRSGSEAEGLGSETSPTVDDEEEMLYGDSSALFSPSKEEARRSSQPPADRDPAPFKADPTHWCLLVRENGTMEIYQLPDWRLVFLVKNFPVGQRVLVDSSFGQPTTQGEVRKEEATRQGELPLVKEVLLVALGSRQSRPYLLVHVDQELLIYEAFPHDSQLGQGNLKVRFKKVPHNINFREKKPKPSKKKAEGCSTEEGSGGRGRVARFRYFEDIYGYSGVFICGPSPHWLLVTGRGALRLHPMGIDGPIDSFAPFHNVNCPRGFLYFNRQGELRISVLPAYLSYDAPWPVRKIPLRCTAHYVAYHVESKVYAVATSTNTPCTRIPRMTGEEKEFEAIERDDRYIHPQQEAFSIQLISPVSWEAIPNARIELEEWEHVTCMKTVSLRSEETVSGLKGYVAAGTCLMQGEEVTCRGRILIMDVIEVVPEPGQPLTKNKFKVLYEKEQKGPVTALCHCNGHLVSAIGQKIFLWSLRASELTGMAFIDTQLYIHQMISVKNFILAADVMKSISLLRYQEESKTLSLVSRDAKPLEVYSVDFMVDNAQLGFLVSDRDRNLMVYMYLPEAKESFGGMRLLRRADFHVGAHVNTFWRTPCRGAAEGPSKKSVVWENKHITWFATLDGGIGLLLPMQEKTYRRLLMLQNALTTMLPHHAGLNPRAFRMLHVDRRILQNAVRNVLDGELLNRYLYLSTMERSELAKKIGTTPDIILDDLLETDRVTAHF.

4 disordered regions span residues 404–435 (PASSVREAADKEEPPSKKKRVEPAVGWTGGKT), 545–569 (EEETPKAESTEQEPSAPKAEEDGRR), 713–775 (GGAR…PAPF), and 899–921 (FREKKPKPSKKKAEGCSTEEGSG). The span at 410 to 419 (EAADKEEPPS) shows a compositional bias: basic and acidic residues. A phosphoserine mark is found at serine 754 and serine 764. Residues 756 to 773 (SKEEARRSSQPPADRDPA) are compositionally biased toward basic and acidic residues.

It belongs to the CPSF1 family. As to quaternary structure, component of the cleavage and polyadenylation specificity factor (CPSF) complex, composed of CPSF1, CPSF2, CPSF3, CPSF4 and FIP1L1. Found in a complex with CPSF1, FIP1L1 and PAPOLA. Interacts with FIP1L1 and SRRM1. Interacts with TUT1; the interaction is direct and mediates the recruitment of the CPSF complex on the 3'UTR of selected pre-mRNAs. Interacts with TENT2/GLD2.

The protein resides in the nucleus. Its subcellular location is the nucleoplasm. In terms of biological role, component of the cleavage and polyadenylation specificity factor (CPSF) complex that plays a key role in pre-mRNA 3'-end formation, recognizing the AAUAAA signal sequence and interacting with poly(A) polymerase and other factors to bring about cleavage and poly(A) addition. This subunit is involved in the RNA recognition step of the polyadenylation reaction. May play a role in eye morphogenesis and the development of retinal ganglion cell projections to the midbrain. The sequence is that of Cleavage and polyadenylation specificity factor subunit 1 (Cpsf1) from Mus musculus (Mouse).